We begin with the raw amino-acid sequence, 283 residues long: Acetylglutamate kinase (283 aa).

Substrate is bound by residues 63-64 (GG), Arg-85, and Asn-178.

Belongs to the acetylglutamate kinase family. ArgB subfamily.

The protein resides in the cytoplasm. It carries out the reaction N-acetyl-L-glutamate + ATP = N-acetyl-L-glutamyl 5-phosphate + ADP. The protein operates within amino-acid biosynthesis; L-arginine biosynthesis; N(2)-acetyl-L-ornithine from L-glutamate: step 2/4. Catalyzes the ATP-dependent phosphorylation of N-acetyl-L-glutamate. This chain is Acetylglutamate kinase, found in Prochlorococcus marinus (strain MIT 9301).